Consider the following 208-residue polypeptide: Large ribosomal subunit protein uL4 (208 aa).

This sequence belongs to the universal ribosomal protein uL4 family. Part of the 50S ribosomal subunit.

Its function is as follows. One of the primary rRNA binding proteins, this protein initially binds near the 5'-end of the 23S rRNA. It is important during the early stages of 50S assembly. It makes multiple contacts with different domains of the 23S rRNA in the assembled 50S subunit and ribosome. Functionally, forms part of the polypeptide exit tunnel. This Anaplasma marginale (strain Florida) protein is Large ribosomal subunit protein uL4.